A 170-amino-acid chain; its full sequence is Bifunctional protein PyrR (170 aa).

The short motif at 90–102 is the PRPP-binding element; that stretch reads LVLIDDVLMSGRT.

Belongs to the purine/pyrimidine phosphoribosyltransferase family. PyrR subfamily.

The enzyme catalyses UMP + diphosphate = 5-phospho-alpha-D-ribose 1-diphosphate + uracil. Regulates the transcription of the pyrimidine nucleotide (pyr) operon in response to exogenous pyrimidines. In terms of biological role, also displays a weak uracil phosphoribosyltransferase activity which is not physiologically significant. The sequence is that of Bifunctional protein PyrR from Pseudomonas syringae pv. tomato (strain ATCC BAA-871 / DC3000).